Reading from the N-terminus, the 323-residue chain is RNA polymerase sigma factor SigB (323 aa).

The sufficient to interact with RbpA stretch occupies residues 1–228; that stretch reads MADAPTRATT…DMPVGSEEEA (228 aa). Residues 25-59 form a sigma-70 factor domain-1 region; that stretch reads DLVRVYLNGIGKTALLNAAGEVELAKRIEAGLYAE. Positions 90-160 are sigma-70 factor domain-2; the sequence is LLEANLRLVV…TRGMADQSRT (71 aa). The Polymerase core binding motif lies at 114-117; it reads DLIQ. The sigma-70 factor domain-3 stretch occupies residues 169–245; sequence EQVNKLARIK…DAEAMSAENA (77 aa). The tract at residues 258 to 311 is sigma-70 factor domain-4; the sequence is VLATLDEREHQVIRLRFGLDDGQPRTLDQIGKLFGLSRERVRQIERDVMSKLRH. Positions 284 to 303 form a DNA-binding region, H-T-H motif; sequence LDQIGKLFGLSRERVRQIER.

The protein belongs to the sigma-70 factor family. Monomer. Interacts transiently with the RNA polymerase catalytic core formed by RpoA, RpoB, RpoC and RpoZ (2 alpha, 1 beta, 1 beta' and 1 omega subunit) to form the RNA polymerase holoenzyme that can initiate transcription.

In terms of biological role, sigma factors are initiation factors that promote the attachment of RNA polymerase to specific initiation sites and are then released. A non-essential principal sigma factor that responds to cell envelope stress and hypoxia. This Mycobacterium tuberculosis (strain CDC 1551 / Oshkosh) protein is RNA polymerase sigma factor SigB (sigB).